The sequence spans 564 residues: Periplasmic [NiFe] hydrogenase large subunit (564 aa).

Ni(2+) is bound by residues C72, C75, C543, and C546. The propeptide occupies 550-564; it reads VIEPETNEILKFKVC.

Belongs to the [NiFe]/[NiFeSe] hydrogenase large subunit family. Heterodimer of a large and a small subunit. Ni(2+) is required as a cofactor.

The protein resides in the periplasm. It carries out the reaction 2 Fe(III)-[cytochrome c3] + H2 = 2 Fe(II)-[cytochrome c3] + 2 H(+). The polypeptide is Periplasmic [NiFe] hydrogenase large subunit (hydB) (Solidesulfovibrio fructosivorans (Desulfovibrio fructosivorans)).